Reading from the N-terminus, the 390-residue chain is Glutamyl-tRNA reductase (390 aa).

Substrate-binding positions include 46-49, Ser96, 101-103, and Gln107; these read TCNR and EAQ. The active-site Nucleophile is Cys47. Position 176-181 (176-181) interacts with NADP(+); that stretch reads GAGEMA.

Belongs to the glutamyl-tRNA reductase family. In terms of assembly, homodimer.

It carries out the reaction (S)-4-amino-5-oxopentanoate + tRNA(Glu) + NADP(+) = L-glutamyl-tRNA(Glu) + NADPH + H(+). It participates in porphyrin-containing compound metabolism; protoporphyrin-IX biosynthesis; 5-aminolevulinate from L-glutamyl-tRNA(Glu): step 1/2. In terms of biological role, catalyzes the NADPH-dependent reduction of glutamyl-tRNA(Glu) to glutamate 1-semialdehyde (GSA). The sequence is that of Glutamyl-tRNA reductase from Thermus thermophilus (strain ATCC BAA-163 / DSM 7039 / HB27).